The following is a 476-amino-acid chain: Ubiquinone biosynthesis monooxygenase COQ6, mitochondrial (476 aa).

A mitochondrion-targeting transit peptide spans 1–35; it reads MAARIGSMAGLLCVRWWSSAQLAARGGPLVASQRW. Residue K219 is modified to N6-succinyllysine.

It belongs to the UbiH/COQ6 family. In terms of assembly, component of a multi-subunit COQ enzyme complex, composed of at least COQ3, COQ4, COQ5, COQ6, COQ7 and COQ9. Interacts with COQ8B and COQ7. FAD serves as cofactor. In terms of tissue distribution, expressed in the kidney, in podocytes.

Its subcellular location is the mitochondrion inner membrane. The protein localises to the golgi apparatus. The protein resides in the cell projection. It catalyses the reaction 4-hydroxy-3-(all-trans-decaprenyl)benzoate + 2 reduced [2Fe-2S]-[ferredoxin] + O2 + 2 H(+) = 3,4-dihydroxy-5-(all-trans-decaprenyl)benzoate + 2 oxidized [2Fe-2S]-[ferredoxin] + H2O. It carries out the reaction 2-methoxy-6-(all-trans-decaprenyl)phenol + 2 reduced [2Fe-2S]-[ferredoxin] + O2 + 2 H(+) = 2-methoxy-6-(all-trans-decaprenyl)benzene-1,4-diol + 2 oxidized [2Fe-2S]-[ferredoxin] + H2O. Its pathway is cofactor biosynthesis; ubiquinone biosynthesis. In terms of biological role, FAD-dependent monooxygenase required for two non-consecutive steps during ubiquinone biosynthesis. Required for the C5-ring hydroxylation during ubiquinone biosynthesis by catalyzing the hydroxylation of 4-hydroxy-3-(all-trans-decaprenyl)benzoic acid to 3,4-dihydroxy-5-(all-trans-decaprenyl)benzoic acid. Also acts downstream of COQ4, for the C1-hydroxylation during ubiquinone biosynthesis by catalyzing the hydroxylation of 2-methoxy-6-(all-trans-decaprenyl)phenol to 2-methoxy-6-(all-trans-decaprenyl)benzene-1,4-diol. The electrons required for the hydroxylation reaction are funneled indirectly to COQ6 from NADPH via a ferredoxin/ferredoxin reductase system composed of FDX2 and FDXR. This Mus musculus (Mouse) protein is Ubiquinone biosynthesis monooxygenase COQ6, mitochondrial.